Consider the following 353-residue polypeptide: Bone morphogenetic protein 2 (353 aa).

Residues 1-239 constitute a propeptide that is removed on maturation; it reads GSLKRPEDLL…GHPLHKREKR (239 aa). Asn-91, Asn-121, and Asn-157 each carry an N-linked (GlcNAc...) asparagine glycan. Residues 228 to 248 form a disordered region; sequence GKGHPLHKREKRQAKHKQRKR. Basic residues predominate over residues 231–248; sequence HPLHKREKRQAKHKQRKR. 3 disulfide bridges follow: Cys-253–Cys-318, Cys-282–Cys-350, and Cys-286–Cys-352. N-linked (GlcNAc...) asparagine glycosylation occurs at Asn-295.

The protein belongs to the TGF-beta family. As to quaternary structure, homodimer; disulfide-linked.

It localises to the secreted. Its function is as follows. Negatively regulates the structure and function of the limb apical ectodermal ridge. In Gallus gallus (Chicken), this protein is Bone morphogenetic protein 2 (BMP2).